Consider the following 478-residue polypeptide: Glycogen synthase (478 aa).

Lys16 is a binding site for ADP-alpha-D-glucose.

It belongs to the glycosyltransferase 1 family. Bacterial/plant glycogen synthase subfamily.

The enzyme catalyses [(1-&gt;4)-alpha-D-glucosyl](n) + ADP-alpha-D-glucose = [(1-&gt;4)-alpha-D-glucosyl](n+1) + ADP + H(+). The protein operates within glycan biosynthesis; glycogen biosynthesis. Its function is as follows. Synthesizes alpha-1,4-glucan chains using ADP-glucose. The polypeptide is Glycogen synthase (Lachnoclostridium phytofermentans (strain ATCC 700394 / DSM 18823 / ISDg) (Clostridium phytofermentans)).